A 133-amino-acid polypeptide reads, in one-letter code: Nickel-responsive regulator (133 aa).

Residues His-76, His-87, His-89, and Cys-95 each coordinate Ni(2+).

This sequence belongs to the transcriptional regulatory CopG/NikR family. As to quaternary structure, homotetramer. Ni(2+) serves as cofactor.

Its function is as follows. Transcriptional repressor of the nikABCDE operon. Is active in the presence of excessive concentrations of intracellular nickel. In Salmonella paratyphi A (strain ATCC 9150 / SARB42), this protein is Nickel-responsive regulator.